Here is a 463-residue protein sequence, read N- to C-terminus: MRSLSSIALLSVVGAASAQAGPWAQCGGKSFSGSSECASGWKCQELNEWFSQCVPGAESTTPTVSSTPTPTDAPSVSITASVTTGINKSISVSSASKSTPLPSSSSASPSPRPTGSGSFAKADGLQFSIDGETKYFAGTNAYWLPFQMNDADIDSVFDHLEQAGLKILRVWGFNDVNTAPSPGTVYFQLHDKEKGTSTINTGKDGLQRLDYVVAAAEKHGVKLIIPFVNSWDDYGGYNAYVKAYGGSKTEWFTNEKIQSVYQAYIKAVVSRYRDSPAIFAWELGNEPRCSGCSTDVIHGWATKISAYIKSLDPNHMVALGDEGMGLTIGSDQSYPYGTSEGNDFEKNLAIPDIDFGTLHLYTTDWGIKDNAWGNGWVENHAKACKAAGKPCLFEEYGMKGNHCTDELKWQKTSLSSGTAADLIWQYGQQLSTGESPKDAYSIFYGTDEWKCAVMDHMENVNKN.

The N-terminal stretch at Met1–Ala18 is a signal peptide. A CBM1 domain is found at Gln19–Val54. The tract at residues Ala57 to Ile78 is disordered. Positions Ser59–Ser77 are enriched in low complexity. Positions Ser75–Ser118 are ser-rich linker. Asn87 is a glycosylation site (N-linked (GlcNAc...) asparagine). A compositionally biased stretch (low complexity) spans Ser93 to Ser118. The segment at Ser93 to Lys121 is disordered. The tract at residues Phe119–Asn463 is catalytic. Substrate-binding residues include Trp171 and Asn285. The Proton donor/acceptor role is filled by Glu286. Tyr361 contacts substrate. Catalysis depends on Glu395, which acts as the Nucleophile. Trp424 is a substrate binding site.

It belongs to the glycosyl hydrolase 5 (cellulase A) family.

The protein resides in the secreted. It catalyses the reaction Random hydrolysis of (1-&gt;4)-beta-D-mannosidic linkages in mannans, galactomannans and glucomannans.. Its function is as follows. Endo-1,4-mannanase, a crucial enzyme for depolymerization of seed galactomannans and wood galactoglucomannans. This chain is Probable mannan endo-1,4-beta-mannosidase F (manF), found in Aspergillus oryzae (strain ATCC 42149 / RIB 40) (Yellow koji mold).